We begin with the raw amino-acid sequence, 149 residues long: UPF0260 protein PFL_1499 (149 aa).

This sequence belongs to the UPF0260 family.

This chain is UPF0260 protein PFL_1499, found in Pseudomonas fluorescens (strain ATCC BAA-477 / NRRL B-23932 / Pf-5).